We begin with the raw amino-acid sequence, 669 residues long: Gametogenetin-binding protein 2 (669 aa).

Disordered regions lie at residues Gln375–Cys421 and Pro452–Gly475. A compositionally biased stretch (basic residues) spans Glu376–Lys388. Polar residues predominate over residues Glu398–Asn408.

Its subcellular location is the cytoplasm. May be involved in spermatogenesis. In Xenopus tropicalis (Western clawed frog), this protein is Gametogenetin-binding protein 2 (ggnbp2).